A 297-amino-acid polypeptide reads, in one-letter code: Formylmethanofuran--tetrahydromethanopterin formyltransferase (297 aa).

This sequence belongs to the FTR family. Homotetramer.

Its subcellular location is the cytoplasm. The catalysed reaction is N-formylmethanofuran + 5,6,7,8-tetrahydromethanopterin + H(+) = N(5)-formyl-5,6,7,8-tetrahydromethanopterin + methanofuran. It functions in the pathway one-carbon metabolism; methanogenesis from CO(2); 5,10-methenyl-5,6,7,8-tetrahydromethanopterin from CO(2): step 2/3. Catalyzes the reversible transfer of a formyl group from formylmethanofuran (formyl-MFR) to tetrahydromethanopterin (H(4)MPT) to produce 5-formyl tetrahydromethanopterin (5-formyl-H(4)MPT) and methanofuran (MFR). The chain is Formylmethanofuran--tetrahydromethanopterin formyltransferase from Methanosarcina acetivorans (strain ATCC 35395 / DSM 2834 / JCM 12185 / C2A).